We begin with the raw amino-acid sequence, 220 residues long: NADH-quinone oxidoreductase subunit I (220 aa).

2 4Fe-4S ferredoxin-type domains span residues 71-102 and 112-141; these read LQRL…IITH and DSYT…MGNR. Positions 82, 85, 88, 92, 121, 124, 127, and 131 each coordinate [4Fe-4S] cluster. A disordered region spans residues 189 to 220; it reads ATPLDYVQEPSKEESKKETPTSPEANKGDENV. Positions 198 to 207 are enriched in basic and acidic residues; that stretch reads PSKEESKKET.

The protein belongs to the complex I 23 kDa subunit family. In terms of assembly, NDH-1 is composed of 14 different subunits. Subunits NuoA, H, J, K, L, M, N constitute the membrane sector of the complex. [4Fe-4S] cluster serves as cofactor.

The protein localises to the cell inner membrane. The catalysed reaction is a quinone + NADH + 5 H(+)(in) = a quinol + NAD(+) + 4 H(+)(out). Its function is as follows. NDH-1 shuttles electrons from NADH, via FMN and iron-sulfur (Fe-S) centers, to quinones in the respiratory chain. The immediate electron acceptor for the enzyme in this species is believed to be ubiquinone. Couples the redox reaction to proton translocation (for every two electrons transferred, four hydrogen ions are translocated across the cytoplasmic membrane), and thus conserves the redox energy in a proton gradient. This Helicobacter acinonychis (strain Sheeba) protein is NADH-quinone oxidoreductase subunit I.